The following is a 915-amino-acid chain: Isoleucine--tRNA ligase (915 aa).

The 'HIGH' region signature appears at 64 to 74; it reads PYANGNFHVGH. Glu557 is a binding site for L-isoleucyl-5'-AMP. The short motif at 598–602 is the 'KMSKS' region element; that stretch reads AMSKS. Lys601 provides a ligand contact to ATP. Residues Cys887, Cys890, Cys902, and Cys905 each contribute to the Zn(2+) site.

Belongs to the class-I aminoacyl-tRNA synthetase family. IleS type 1 subfamily. Monomer. Requires Zn(2+) as cofactor.

It localises to the cytoplasm. The enzyme catalyses tRNA(Ile) + L-isoleucine + ATP = L-isoleucyl-tRNA(Ile) + AMP + diphosphate. Catalyzes the attachment of isoleucine to tRNA(Ile). As IleRS can inadvertently accommodate and process structurally similar amino acids such as valine, to avoid such errors it has two additional distinct tRNA(Ile)-dependent editing activities. One activity is designated as 'pretransfer' editing and involves the hydrolysis of activated Val-AMP. The other activity is designated 'posttransfer' editing and involves deacylation of mischarged Val-tRNA(Ile). In Leptospira biflexa serovar Patoc (strain Patoc 1 / ATCC 23582 / Paris), this protein is Isoleucine--tRNA ligase.